A 270-amino-acid chain; its full sequence is UPF0354 protein BCAH187_A4826 (270 aa).

It belongs to the UPF0354 family.

This chain is UPF0354 protein BCAH187_A4826, found in Bacillus cereus (strain AH187).